The chain runs to 137 residues: Succinate dehydrogenase cytochrome b560 subunit (137 aa).

2 helical membrane passes run 31 to 51 (AFLA…DLSL) and 60 to 80 (FFFL…FTLL). Histidine 85 contacts heme. A helical membrane pass occupies residues 106 to 126 (VYTSGIIMLFCAAFLALLNII).

Belongs to the cytochrome b560 family. Forms part of complex II containing four subunits: a 70 kDa flavoprotein (FP), a 27 kDa iron-sulfur protein (IP), a cytochrome B and a membrane-anchoring protein. It depends on heme as a cofactor.

The protein localises to the mitochondrion inner membrane. The protein operates within carbohydrate metabolism; tricarboxylic acid cycle. Membrane-anchoring subunit of succinate dehydrogenase (SDH) that is involved in complex II of the mitochondrial electron transport chain and is responsible for transferring electrons from succinate to ubiquinone (coenzyme Q). This chain is Succinate dehydrogenase cytochrome b560 subunit (SDH3), found in Marchantia polymorpha (Common liverwort).